The sequence spans 476 residues: Protein transport protein Sec61 subunit alpha isoform 1 (476 aa).

Residues 1-33 (MAIKFLEVIKPFCVILPEIQKPERKIQFKEKVL) are Cytoplasmic-facing. Residues 34 to 53 (WTAITLFIFLVCCQIPLFGI) form a helical membrane-spanning segment. Over 54-76 (MSSDSADPFYWMRVILASNRGTL) the chain is Lumenal. The chain crosses the membrane as a helical span at residues 77–96 (MELGISPIVTSGLIMQLLAG). Over 97-117 (AKIIEVGDTPKDRALFNGAQK) the chain is Cytoplasmic. The helical transmembrane segment at 118–138 (LFGMIITIGQSIVYVMTGMYG) threads the bilayer. Residues 139-144 (DPSEMG) are Lumenal-facing. The helical transmembrane segment at 145–165 (AGICLLITIQLFVAGLIVLLL) threads the bilayer. Residues 166 to 172 (DELLQKG) lie on the Cytoplasmic side of the membrane. Residues 173-193 (YGLGSGISLFIATNICETIVW) traverse the membrane as a helical segment. At 194–240 (KAFSPTTVNTGRGMEFEGAIIALFHLLATRTDKVRALREAFYRQNLP) the chain is on the lumenal side. Residues 241-261 (NLMNLIATIFVFAVVIYFQGF) traverse the membrane as a helical segment. The Cytoplasmic portion of the chain corresponds to 262–288 (RVDLPIKSARYRGQYNTYPIKLFYTSN). The helical transmembrane segment at 289 to 309 (IPIILQSALVSNLYVISQMLS) threads the bilayer. At 310–354 (ARFSGNLLVSLLGTWSDTSSGGPARAYPVGGLCYYLSPPESFGSV) the chain is on the lumenal side. Residues 355–375 (LEDPVHAVVYIVFMLGSCAFF) form a helical membrane-spanning segment. Residues 376-420 (SKTWIEVSGSSAKDVAKQLKEQQMVMRGHRETSMVHELNRYIPTA) are Cytoplasmic-facing. Residues 421–441 (AAFGGLCIGALSVLADFLGAI) traverse the membrane as a helical segment. Residues 442–445 (GSGT) lie on the Lumenal side of the membrane. A helical transmembrane segment spans residues 446 to 462 (GILLAVTIIYQYFEIFV). The Cytoplasmic segment spans residues 463–476 (KEQSEVGSMGALLF).

It belongs to the SecY/SEC61-alpha family. The SEC61 channel-forming translocon complex consists of channel-forming core components SEC61A1, SEC61B and SEC61G and different auxiliary components such as SEC62 and SEC63. The SEC61 channel associates with the multi-pass translocon (MPT) complex. As to expression, expressed in proximal and distal tubules in kidney (at protein level).

The protein resides in the endoplasmic reticulum membrane. Component of SEC61 channel-forming translocon complex that mediates transport of signal peptide-containing precursor polypeptides across the endoplasmic reticulum (ER). Forms a ribosome receptor and a gated pore in the ER membrane, both functions required for cotranslational translocation of nascent polypeptides. May cooperate with auxiliary protein SEC62, SEC63 and HSPA5/BiP to enable post-translational transport of small presecretory proteins. The SEC61 channel is also involved in ER membrane insertion of transmembrane proteins: it mediates membrane insertion of the first few transmembrane segments of proteins, while insertion of subsequent transmembrane regions of multi-pass membrane proteins is mediated by the multi-pass translocon (MPT) complex. The SEC61 channel cooperates with the translocating protein TRAM1 to import nascent proteins into the ER. Controls the passive efflux of calcium ions from the ER lumen to the cytosol through SEC61 channel, contributing to the maintenance of cellular calcium homeostasis. Plays a critical role in nephrogenesis, specifically at pronephros stage. In Homo sapiens (Human), this protein is Protein transport protein Sec61 subunit alpha isoform 1 (SEC61A1).